The chain runs to 360 residues: MAAAISAAVSLPSSKSSSLLTKISSVSPQRIFLKKSTVCYRRVVSVKAQVTTDTTEAPPVKVVKESKKQEEGIVVNKFKPKNPYTGRCLLNTKITGDDAPGETWHIVFTTEGEVPYREGQSIGVIPEGIDKNGKPHKLRLYSIASSAIGDFGDSKTVSLCVKRLVYTNDGGEIVKGVCSNFLCDLKPGDEAKITGPVGKEMLMPKDPNATIIMLGTGTGIAPFRSFLWKMFFEEHEDYKFNGLAWLFLGVPTSSSLLYKEEFEKMKEKNPDNFRLDFAVSREQTNEKGEKMYIQTRMAEYAEELWELLKKDNTFVYMCGLKGMEKGIDDIMVSLAAKDGIDWLEYKKQLKRSEQWNVEVY.

The transit peptide at 1–49 (MAAAISAAVSLPSSKSSSLLTKISSVSPQRIFLKKSTVCYRRVVSVKAQ) directs the protein to the chloroplast. The FAD-binding FR-type domain occupies 81–203 (KNPYTGRCLL…TGPVGKEMLM (123 aa)). Residues 139 to 142 (RLYS), 160 to 162 (CVK), Y166, and 177 to 179 (VCS) contribute to the FAD site. NADP(+)-binding residues include S142 and K162. A disulfide bond links C178 and C183. S179 is modified (phosphoserine). T210 carries the post-translational modification Phosphothreonine. FAD is bound at residue T218. Residues T218, 250–251 (VP), 280–281 (SR), K290, 319–320 (GL), and E358 each bind NADP(+).

This sequence belongs to the ferredoxin--NADP reductase type 1 family. In terms of assembly, heterodimer with LFNR2. Interacts with PGRL1A and PGRL1B. Interacts with TIC62. Component of high molecular weight thylakoid LFNRs-containing protein complexes containing LIR1, LFNR1, LFNR2, TIC62 and TROL proteins. Interacts directly with LIR1 and TIC62; LIR1 increases the affinity of LFNR1 and LFNR2 for TIC62. Binds to YCF54 in chloroplasts. Requires FAD as cofactor. In terms of processing, may form interchain disulfide bonds with LIR1. Expressed in shoots. Restricted to green tissues, being more abundant in siliques.

The protein localises to the plastid. Its subcellular location is the chloroplast stroma. It is found in the chloroplast thylakoid membrane. It catalyses the reaction 2 reduced [2Fe-2S]-[ferredoxin] + NADP(+) + H(+) = 2 oxidized [2Fe-2S]-[ferredoxin] + NADPH. The protein operates within energy metabolism; photosynthesis. In terms of biological role, plays a key role in regulating the relative amounts of cyclic and non-cyclic electron flow to meet the demands of the plant for ATP and reducing power. Probable electron donor required for the MgProto monomethylester (MgProtoME) cyclase complex reaction to form protochlorophyllide, thus connecting chlorophyll synthesis with photosynthetic activity. This is Ferredoxin--NADP reductase, leaf isozyme 1, chloroplastic from Arabidopsis thaliana (Mouse-ear cress).